The following is a 280-amino-acid chain: 4-diphosphocytidyl-2-C-methyl-D-erythritol kinase (280 aa).

The active site involves lysine 11. 95-105 contacts ATP; sequence PVGAGLGGGSS. Aspartate 137 is a catalytic residue.

It belongs to the GHMP kinase family. IspE subfamily.

It catalyses the reaction 4-CDP-2-C-methyl-D-erythritol + ATP = 4-CDP-2-C-methyl-D-erythritol 2-phosphate + ADP + H(+). Its pathway is isoprenoid biosynthesis; isopentenyl diphosphate biosynthesis via DXP pathway; isopentenyl diphosphate from 1-deoxy-D-xylulose 5-phosphate: step 3/6. Functionally, catalyzes the phosphorylation of the position 2 hydroxy group of 4-diphosphocytidyl-2C-methyl-D-erythritol. This is 4-diphosphocytidyl-2-C-methyl-D-erythritol kinase from Geobacter sp. (strain M21).